We begin with the raw amino-acid sequence, 227 residues long: Probable septum site-determining protein MinC (227 aa).

The protein belongs to the MinC family. As to quaternary structure, interacts with MinD and FtsZ.

In terms of biological role, cell division inhibitor that blocks the formation of polar Z ring septums. Rapidly oscillates between the poles of the cell to destabilize FtsZ filaments that have formed before they mature into polar Z rings. Prevents FtsZ polymerization. In Clostridioides difficile (strain 630) (Peptoclostridium difficile), this protein is Probable septum site-determining protein MinC.